The chain runs to 421 residues: DUF724 domain-containing protein 8 (421 aa).

Polar residues-rich tracts occupy residues 149 to 165 (TQGS…NANE) and 199 to 213 (PRNQ…TLEN). The interval 149–229 (TQGSGDKTGD…NRKRKREENL (81 aa)) is disordered. The 175-residue stretch at 246–420 (VLPFEKKLRI…LEFLATASAP (175 aa)) folds into the DUF724 domain. Residues 361–397 (EKVTAEKESVKAENKRKILELQRLNEEMDKEIAQSKS) adopt a coiled-coil conformation.

As to expression, expressed in leaves and flowers, and at lower levels in roots, stems and siliques.

The protein resides in the nucleus. Its function is as follows. May be involved in the polar growth of plant cells via transportation of RNAs. The chain is DUF724 domain-containing protein 8 from Arabidopsis thaliana (Mouse-ear cress).